Consider the following 188-residue polypeptide: Der GTPase-activating protein YihI (188 aa).

Disordered stretches follow at residues 1 to 80 (MKQP…VPVP) and 162 to 188 (DEDDVEREEKQEDILQLLKRGNPKDTF). Residues 27–37 (TRDELDAEARD) show a composition bias toward basic and acidic residues. Residues 47–57 (NRSGARTNVEG) show a composition bias toward polar residues.

This sequence belongs to the YihI family. In terms of assembly, interacts with Der.

In terms of biological role, a GTPase-activating protein (GAP) that modifies Der/EngA GTPase function. May play a role in ribosome biogenesis. This is Der GTPase-activating protein YihI from Yersinia pseudotuberculosis serotype O:3 (strain YPIII).